The chain runs to 446 residues: Exodeoxyribonuclease 7 large subunit (446 aa).

The protein belongs to the XseA family. Heterooligomer composed of large and small subunits.

It localises to the cytoplasm. It catalyses the reaction Exonucleolytic cleavage in either 5'- to 3'- or 3'- to 5'-direction to yield nucleoside 5'-phosphates.. In terms of biological role, bidirectionally degrades single-stranded DNA into large acid-insoluble oligonucleotides, which are then degraded further into small acid-soluble oligonucleotides. This is Exodeoxyribonuclease 7 large subunit from Streptococcus pneumoniae (strain Hungary19A-6).